Reading from the N-terminus, the 433-residue chain is Alpha-(1,3)-fucosyltransferase 4 (433 aa).

The segment at 1-20 (MAPAGRKLQHESRCRPSRPV) is disordered. Over 1 to 54 (MAPAGRKLQHESRCRPSRPVDAWRAAATTRGRCMGTPGARRTARRGGWGLPRTS) the chain is Cytoplasmic. Residues 55–74 (SGLAAAGLLCTALTACLCWG) traverse the membrane as a helical; Signal-anchor for type II membrane protein segment. Over 75–433 (QLPPLPWASP…IHNLADWFQR (359 aa)) the chain is Lumenal. 2 N-linked (GlcNAc...) asparagine glycosylation sites follow: asparagine 117 and asparagine 218.

Belongs to the glycosyltransferase 10 family. In terms of tissue distribution, in adult, highest expression in spleen, testis, brain, lung, kidney and skeletal muscle and to a lesser extent in liver and heart.

It localises to the golgi apparatus. It is found in the golgi stack membrane. The enzyme catalyses a beta-D-galactosyl-(1-&gt;4)-N-acetyl-beta-D-glucosaminyl derivative + GDP-beta-L-fucose = a beta-D-galactosyl-(1-&gt;4)-[alpha-L-fucosyl-(1-&gt;3)]-N-acetyl-beta-D-glucosaminyl derivative + GDP + H(+). The catalysed reaction is an N-acetyl-alpha-neuraminyl-(2-&gt;3)-beta-D-galactosyl-(1-&gt;4)-N-acetyl-beta-D-glucosaminyl derivative + GDP-beta-L-fucose = an alpha-Neu5Ac-(2-&gt;3)-beta-D-Gal-(1-&gt;4)-[alpha-L-Fuc-(1-&gt;3)]-beta-D-GlcNAc derivative + GDP + H(+). It catalyses the reaction an alpha-Neu5Ac-(2-&gt;3)-beta-D-Gal-(1-&gt;4)-beta-D-GlcNAc-(1-&gt;3)-beta-D-Gal-(1-&gt;4)-beta-D-GlcNAc derivative + GDP-beta-L-fucose = an alpha-Neu5Ac-(2-&gt;3)-beta-D-Gal-(1-&gt;4)-beta-D-GlcNAc-(1-&gt;3)-beta-D-Gal-(1-&gt;4)-[alpha-L-Fuc-(1-&gt;3)]-beta-D-GlcNAc derivative + GDP + H(+). It carries out the reaction an alpha-Neu5Ac-(2-&gt;3)-beta-D-Gal-(1-&gt;4)-beta-D-GlcNAc6S derivative + GDP-beta-L-fucose = an alpha-Neu5Ac-(2-&gt;3)-beta-D-Gal-(1-&gt;4)-[alpha-L-Fuc-(1-&gt;3)]-beta-D-GlcNAc6S derivative + GDP + H(+). The protein operates within protein modification; protein glycosylation. In terms of biological role, catalyzes alpha(1-&gt;3) linkage of fucosyl moiety transferred from GDP-beta-L-fucose to N-acetyl glucosamine (GlcNAc) within type 2 lactosamine (LacNAc, Gal-beta(1-&gt;4)GlcNAc) glycan attached to N- or O-linked glycoproteins. Robustly fucosylates nonsialylated distal LacNAc unit of the polylactosamine chain to form Lewis X antigen (CD15), a glycan determinant known to mediate important cellular functions in development and immunity. Fucosylates with lower efficiency sialylated LacNAc acceptors to form sialyl Lewis X and 6-sulfo sialyl Lewis X determinants that serve as recognition epitopes for C-type lectins. Together with FUT7 contributes to SELE, SELL and SELP selectin ligand biosynthesis and selectin-dependent lymphocyte homing, leukocyte migration and blood leukocyte homeostasis. In a cell type specific manner, may also fucosylate the internal LacNAc unit of the polylactosamine chain to form VIM-2 antigen that serves as recognition epitope for SELE. This Rattus norvegicus (Rat) protein is Alpha-(1,3)-fucosyltransferase 4 (Fut4).